Here is a 272-residue protein sequence, read N- to C-terminus: Diaminopimelate epimerase (272 aa).

Residues Asn-11 and Asn-60 each contribute to the substrate site. Catalysis depends on Cys-69, which acts as the Proton donor. Substrate is bound by residues 70–71 (GN), Asn-181, and 199–200 (ER). Residue Cys-209 is the Proton acceptor of the active site. Residue 210–211 (GT) coordinates substrate.

Belongs to the diaminopimelate epimerase family. In terms of assembly, homodimer.

It localises to the cytoplasm. It catalyses the reaction (2S,6S)-2,6-diaminopimelate = meso-2,6-diaminopimelate. The protein operates within amino-acid biosynthesis; L-lysine biosynthesis via DAP pathway; DL-2,6-diaminopimelate from LL-2,6-diaminopimelate: step 1/1. Functionally, catalyzes the stereoinversion of LL-2,6-diaminopimelate (L,L-DAP) to meso-diaminopimelate (meso-DAP), a precursor of L-lysine and an essential component of the bacterial peptidoglycan. The chain is Diaminopimelate epimerase from Helicobacter pylori (strain P12).